We begin with the raw amino-acid sequence, 478 residues long: Glutamate-1-semialdehyde 2,1-aminomutase, chloroplastic (478 aa).

At K318 the chain carries N6-(pyridoxal phosphate)lysine.

This sequence belongs to the class-III pyridoxal-phosphate-dependent aminotransferase family. HemL subfamily. As to quaternary structure, homodimer. The cofactor is pyridoxal 5'-phosphate.

It is found in the plastid. It localises to the chloroplast. It catalyses the reaction (S)-4-amino-5-oxopentanoate = 5-aminolevulinate. The protein operates within porphyrin-containing compound metabolism; protoporphyrin-IX biosynthesis; 5-aminolevulinate from L-glutamyl-tRNA(Glu): step 2/2. It participates in porphyrin-containing compound metabolism; chlorophyll biosynthesis. This chain is Glutamate-1-semialdehyde 2,1-aminomutase, chloroplastic (GSA), found in Nicotiana tabacum (Common tobacco).